The primary structure comprises 239 residues: Ribonuclease PH (239 aa).

Phosphate-binding positions include arginine 88 and 126–128 (GTR).

It belongs to the RNase PH family. Homohexameric ring arranged as a trimer of dimers.

It catalyses the reaction tRNA(n+1) + phosphate = tRNA(n) + a ribonucleoside 5'-diphosphate. Functionally, phosphorolytic 3'-5' exoribonuclease that plays an important role in tRNA 3'-end maturation. Removes nucleotide residues following the 3'-CCA terminus of tRNAs; can also add nucleotides to the ends of RNA molecules by using nucleoside diphosphates as substrates, but this may not be physiologically important. Probably plays a role in initiation of 16S rRNA degradation (leading to ribosome degradation) during starvation. This chain is Ribonuclease PH, found in Coxiella burnetii (strain Dugway 5J108-111).